Here is a 404-residue protein sequence, read N- to C-terminus: Homocysteine-responsive endoplasmic reticulum-resident ubiquitin-like domain member 2 protein (404 aa).

The 80-residue stretch at 10-89 (VTLIIKAPNQ…HMVHLVCASR (80 aa)) folds into the Ubiquitin-like domain. The tract at residues 86–153 (CASRSPPSSP…TLSQAQTDPA (68 aa)) is disordered. Composition is skewed to low complexity over residues 88–97 (SRSPPSSPKS) and 109–126 (SSTS…PSPS). Over residues 127-153 (QESLSLVTGSSEGLRQRTLSQAQTDPA) the composition is skewed to polar residues. The chain crosses the membrane as a helical span at residues 301 to 321 (FIMVMGAMLLVYLHQAGWFPF).

The protein resides in the membrane. In terms of biological role, could be involved in the unfolded protein response (UPR) pathway. This chain is Homocysteine-responsive endoplasmic reticulum-resident ubiquitin-like domain member 2 protein (Herpud2), found in Mus musculus (Mouse).